A 388-amino-acid chain; its full sequence is Chorismate synthase (388 aa).

Residues arginine 39 and arginine 45 each contribute to the NADP(+) site. The interval glutamate 95 to lysine 118 is disordered. Residues arginine 130 to serine 132, asparagine 251 to alanine 252, glycine 296, lysine 311 to threonine 315, and arginine 337 each bind FMN.

The protein belongs to the chorismate synthase family. Homotetramer. Requires FMNH2 as cofactor.

The enzyme catalyses 5-O-(1-carboxyvinyl)-3-phosphoshikimate = chorismate + phosphate. Its pathway is metabolic intermediate biosynthesis; chorismate biosynthesis; chorismate from D-erythrose 4-phosphate and phosphoenolpyruvate: step 7/7. Catalyzes the anti-1,4-elimination of the C-3 phosphate and the C-6 proR hydrogen from 5-enolpyruvylshikimate-3-phosphate (EPSP) to yield chorismate, which is the branch point compound that serves as the starting substrate for the three terminal pathways of aromatic amino acid biosynthesis. This reaction introduces a second double bond into the aromatic ring system. This Listeria welshimeri serovar 6b (strain ATCC 35897 / DSM 20650 / CCUG 15529 / CIP 8149 / NCTC 11857 / SLCC 5334 / V8) protein is Chorismate synthase.